A 229-amino-acid polypeptide reads, in one-letter code: Urease accessory protein UreF (229 aa).

This sequence belongs to the UreF family. In terms of assembly, ureD, UreF and UreG form a complex that acts as a GTP-hydrolysis-dependent molecular chaperone, activating the urease apoprotein by helping to assemble the nickel containing metallocenter of UreC. The UreE protein probably delivers the nickel.

It is found in the cytoplasm. Functionally, required for maturation of urease via the functional incorporation of the urease nickel metallocenter. This Corynebacterium efficiens (strain DSM 44549 / YS-314 / AJ 12310 / JCM 11189 / NBRC 100395) protein is Urease accessory protein UreF.